We begin with the raw amino-acid sequence, 70 residues long: Chondroitin proteoglycan 9 (70 aa).

The first 19 residues, 1 to 19 (MNFWHLLLLAVLFFVTVFG), serve as a signal peptide directing secretion. O-linked (Xyl...) (chondroitin sulfate) serine glycans are attached at residues Ser25 and Ser27.

The protein is Chondroitin proteoglycan 9 (cpg-9) of Caenorhabditis briggsae.